Consider the following 46-residue polypeptide: Major cold-shock protein (46 aa).

Positions Glu-1–Lys-46 constitute a CSD domain.

Homodimer.

Its subcellular location is the cytoplasm. The protein is Major cold-shock protein (cspA) of Aeromonas salmonicida.